The primary structure comprises 85 residues: Turmerin (85 aa).

Post-translationally, the N-terminus is blocked.

Functionally, inhibition of trypsin. Has anticarcinogenic activity, prevents transformation of DMBA-treated JB6 cells. Has antipromoter activity, prevents promotion by tetradecanoyl phorbal acetate (TPA) in JB6 cells. Prevents tertiary butyl hydroperoxide-induced mutagenesis. Protects AT base pairs and shows antimutagenesis activity in TA102 and TA104 S.typhimurium mutagenesis tests. Inhibits paw edema formation induced by phospholipase A2 in Swiss Wistar mice. Prevents the release of arachidonate, the parent compound for the synthesis of prostaglandins and prostacyclins. Has antimalarial activity, kills P.falciparum. Has antivenom activity, nullifies the lethal effects of N.naja venom and inhibits phospholipase A2 present in N.naja venom. Has antifungal activity, inhibits cilia formation by A.niger. Is not toxic or allergenic. This is Turmerin from Curcuma longa (Turmeric).